The sequence spans 510 residues: Arginine biosynthesis bifunctional protein ArgJ, chloroplastic (510 aa).

Substrate is bound by residues Thr-223, Lys-249, Glu-359, Asn-505, and Thr-510.

The protein belongs to the ArgJ family. In terms of assembly, heterodimer of an alpha and a beta chain.

The protein localises to the plastid. Its subcellular location is the chloroplast. It catalyses the reaction N(2)-acetyl-L-ornithine + L-glutamate = N-acetyl-L-glutamate + L-ornithine. It carries out the reaction L-glutamate + acetyl-CoA = N-acetyl-L-glutamate + CoA + H(+). Its pathway is amino-acid biosynthesis; L-arginine biosynthesis; L-ornithine and N-acetyl-L-glutamate from L-glutamate and N(2)-acetyl-L-ornithine (cyclic): step 1/1. It participates in amino-acid biosynthesis; L-arginine biosynthesis; N(2)-acetyl-L-ornithine from L-glutamate: step 1/4. Its function is as follows. Catalyzes two activities which are involved in the cyclic version of arginine biosynthesis: the synthesis of acetylglutamate from glutamate and acetyl-CoA, and of ornithine by transacetylation between acetylornithine and glutamate. The chain is Arginine biosynthesis bifunctional protein ArgJ, chloroplastic from Vitis vinifera (Grape).